Reading from the N-terminus, the 764-residue chain is Polyribonucleotide nucleotidyltransferase (764 aa).

Asp541 and Asp547 together coordinate Mg(2+). The KH domain occupies 607–666 (PRVTAIKIPVDKIGEVIGPKGKVINQITEDTGANISIEDDGTVFVGATDGPSAQAAIDAI). An S1 motif domain is found at 678–747 (GERFLGTVVK…NRGKISLVPV (70 aa)).

This sequence belongs to the polyribonucleotide nucleotidyltransferase family. Mg(2+) is required as a cofactor.

It is found in the cytoplasm. It carries out the reaction RNA(n+1) + phosphate = RNA(n) + a ribonucleoside 5'-diphosphate. Its function is as follows. Involved in mRNA degradation. Catalyzes the phosphorolysis of single-stranded polyribonucleotides processively in the 3'- to 5'-direction. In Nocardia farcinica (strain IFM 10152), this protein is Polyribonucleotide nucleotidyltransferase.